A 158-amino-acid polypeptide reads, in one-letter code: Putative zinc-binding protein ORF9 (158 aa).

The RING-type; degenerate zinc-finger motif lies at 72-111; that stretch reads CPVCGRAVVGPTVREACGHVTCNACETEACAVDRLCIGGG. Residues 126–158 are disordered; the sequence is GPRWRGPRPTRPEAHEAVQRSRGSSEDACTCAP. Residues 135–150 are compositionally biased toward basic and acidic residues; the sequence is TRPEAHEAVQRSRGSS.

In Ictalurid herpesvirus 1 (strain Auburn) (IcHV-1), this protein is Putative zinc-binding protein ORF9 (ORF9).